The following is a 300-amino-acid chain: D-alanine--D-alanine ligase (300 aa).

In terms of domain architecture, ATP-grasp spans 99-293; it reads KKILKYANIN…FAELLNSIVK (195 aa). Residue 126-181 coordinates ATP; the sequence is IEKIGYPVFVKPNSGGSSVATNLVKDKEGIKEAVELALKYDKEVMIENYTKGEEIT. Residues D248, E260, and N262 each coordinate Mg(2+).

Belongs to the D-alanine--D-alanine ligase family. Mg(2+) serves as cofactor. The cofactor is Mn(2+).

The protein localises to the cytoplasm. It carries out the reaction 2 D-alanine + ATP = D-alanyl-D-alanine + ADP + phosphate + H(+). It functions in the pathway cell wall biogenesis; peptidoglycan biosynthesis. Functionally, cell wall formation. This is D-alanine--D-alanine ligase from Clostridium botulinum (strain Okra / Type B1).